Consider the following 352-residue polypeptide: Ribosome biogenesis protein BRX1 homolog (352 aa).

The segment at 1 to 47 (MAATKRKRRGDLEVQAKKPKKNRKDAGQPAKQADVAKEAEEEKDRIP) is disordered. A compositionally biased stretch (basic and acidic residues) spans 34-46 (DVAKEAEEEKDRI). One can recognise a Brix domain in the interval 59–248 (ERILIFSSRG…LIKIFQGSFG (190 aa)). Residue Lys-159 forms a Glycyl lysine isopeptide (Lys-Gly) (interchain with G-Cter in SUMO2) linkage. Position 260 is a phosphoserine (Ser-260). Lys-275 bears the N6-acetyllysine mark. Residues 281 to 301 (QVKDVQKSRKKEPKTILPHDP) are disordered. Residues Lys-313 and Lys-321 each participate in a glycyl lysine isopeptide (Lys-Gly) (interchain with G-Cter in SUMO2) cross-link.

This sequence belongs to the BRX1 family.

It is found in the nucleus. It localises to the nucleolus. In terms of biological role, required for biogenesis of the 60S ribosomal subunit. The sequence is that of Ribosome biogenesis protein BRX1 homolog (Brix1) from Rattus norvegicus (Rat).